The primary structure comprises 645 residues: Phosphomethylpyrimidine synthase (645 aa).

Residues N235, M264, Y293, H329, 349 to 351, 390 to 393, and E429 contribute to the substrate site; these read SRG and DGLR. H433 contacts Zn(2+). Y456 serves as a coordination point for substrate. H497 contacts Zn(2+). [4Fe-4S] cluster-binding residues include C577, C580, and C585.

This sequence belongs to the ThiC family. Homodimer. [4Fe-4S] cluster serves as cofactor.

It catalyses the reaction 5-amino-1-(5-phospho-beta-D-ribosyl)imidazole + S-adenosyl-L-methionine = 4-amino-2-methyl-5-(phosphooxymethyl)pyrimidine + CO + 5'-deoxyadenosine + formate + L-methionine + 3 H(+). Its pathway is cofactor biosynthesis; thiamine diphosphate biosynthesis. Its function is as follows. Catalyzes the synthesis of the hydroxymethylpyrimidine phosphate (HMP-P) moiety of thiamine from aminoimidazole ribotide (AIR) in a radical S-adenosyl-L-methionine (SAM)-dependent reaction. In Vibrio cholerae serotype O1 (strain ATCC 39541 / Classical Ogawa 395 / O395), this protein is Phosphomethylpyrimidine synthase.